A 432-amino-acid chain; its full sequence is MTEQIRIIDAKEHVNEEVKIGAWLTDKRSSGKITFLQLRDGSAYFQGVVSKADVPEEVFSLAKELRQESSMWITGVIHQDSRSHFGYEIEVRNIELVGDSHDYPISPKEHGIEFLLDHRHLWLRSKRQFAIQQIRNEMIRATFEFFNNEGFIKMDPPILTDSAPEGTTELFETDYFDKKAYLSQSGQLYAEAGAMAYGKVFTCGPVFRAEKSKTRRHLTEFWMIEPEMAFCHQEESLKVQERYVAYLVQSVLDNCAYPLHLLDRDPEVLKQYTKLPYPRITYKQAIKMLQDAGMDVKYGDDFGSPEETYLSDQFDQPVFVLNYPKTIKPFYMLTDPEDDQQYVCADMLAPEGYGEIIGGSERETDYDTLKNAIEHAGLDLDEYEWYLDLRKYGSVPHSGFGLGLERAITWVCKLDHLREAIPFPRMINRLKP.

This sequence belongs to the class-II aminoacyl-tRNA synthetase family. As to quaternary structure, homodimer.

The protein resides in the cytoplasm. It carries out the reaction tRNA(Asn) + L-asparagine + ATP = L-asparaginyl-tRNA(Asn) + AMP + diphosphate + H(+). This chain is Asparagine--tRNA ligase, found in Lacticaseibacillus paracasei (strain ATCC 334 / BCRC 17002 / CCUG 31169 / CIP 107868 / KCTC 3260 / NRRL B-441) (Lactobacillus paracasei).